Consider the following 123-residue polypeptide: Large ribosomal subunit protein uL14 (123 aa).

This sequence belongs to the universal ribosomal protein uL14 family. Part of the 50S ribosomal subunit. Forms a cluster with proteins L3 and L19. In the 70S ribosome, L14 and L19 interact and together make contacts with the 16S rRNA in bridges B5 and B8.

Its function is as follows. Binds to 23S rRNA. Forms part of two intersubunit bridges in the 70S ribosome. The polypeptide is Large ribosomal subunit protein uL14 (Photobacterium profundum (strain SS9)).